Consider the following 256-residue polypeptide: Inositol-1-monophosphatase (256 aa).

Residues E60, D77, L79, and D80 each coordinate Mg(2+). E60 is a substrate binding site. Substrate-binding positions include 79–82, R178, and D207; that span reads LDGT. D207 lines the Mg(2+) pocket.

It belongs to the inositol monophosphatase superfamily. The cofactor is Mg(2+).

The enzyme catalyses a myo-inositol phosphate + H2O = myo-inositol + phosphate. The chain is Inositol-1-monophosphatase (suhB) from Caulobacter vibrioides (strain ATCC 19089 / CIP 103742 / CB 15) (Caulobacter crescentus).